We begin with the raw amino-acid sequence, 292 residues long: ATP synthase gamma chain (292 aa).

It belongs to the ATPase gamma chain family. As to quaternary structure, F-type ATPases have 2 components, CF(1) - the catalytic core - and CF(0) - the membrane proton channel. CF(1) has five subunits: alpha(3), beta(3), gamma(1), delta(1), epsilon(1). CF(0) has three main subunits: a, b and c.

It is found in the cell inner membrane. Produces ATP from ADP in the presence of a proton gradient across the membrane. The gamma chain is believed to be important in regulating ATPase activity and the flow of protons through the CF(0) complex. The polypeptide is ATP synthase gamma chain (Hyphomonas neptunium (strain ATCC 15444)).